Reading from the N-terminus, the 708-residue chain is Lactotransferrin (708 aa).

Positions 1 to 19 (MKLFFPALLSLGALGLCLA) are cleaved as a signal peptide. 2 Transferrin-like domains span residues 25–352 (VRWC…GLRE) and 364–693 (VVWC…KLRR). Cystine bridges form between C28-C64 and C38-C55. Positions 44 to 51 (RMKKVRGP) are interaction with E.coli ompC. D79 serves as a coordination point for Fe(3+). Residue K92 is part of the active site. Y111 is a binding site for Fe(3+). Cystine bridges form between C134/C217, C176/C192, C179/C202, C189/C200, and C250/C264. Hydrogencarbonate-binding residues include T136, R140, A142, and G143. Y211 provides a ligand contact to Fe(3+). An N-linked (GlcNAc...) asparagine glycan is attached at N252. Residue H272 coordinates Fe(3+). The Nucleophile role is filled by S278. 2 cysteine pairs are disulfide-bonded: C367-C399 and C377-C390. An N-linked (GlcNAc...) asparagine glycan is attached at N385. Positions 414 and 452 each coordinate Fe(3+). Intrachain disulfides connect C424/C703, C444/C666, C476/C551, C500/C694, C510/C524, C521/C534, C592/C606, and C644/C649. Hydrogencarbonate is bound by residues T478, R482, A484, and G485. N537 carries N-linked (GlcNAc...) asparagine glycosylation. Position 545 (Y545) interacts with Fe(3+). N-linked (GlcNAc...) asparagine glycosylation is present at N594. Residue H614 coordinates Fe(3+).

Belongs to the transferrin family. In terms of assembly, monomer. Found in a complex with LTF, CLU, EPPIN and SEMG1. Interacts with E.coli outer membrane protein C (OmpC). Found in a complex with MPO and LTF; interacts directly with CP, allows Fe(3+) incorporation into LTF and activation of CP ferroxidase activity. Poly-N-acetyllactosaminic carbohydrate moiety seems to be needed for TLR4 activation.

It is found in the secreted. The protein localises to the cytoplasmic granule. In terms of biological role, transferrins are iron binding transport proteins which can bind two Fe(3+) ions in association with the binding of an anion, usually bicarbonate. Major iron-binding and multifunctional protein found in exocrine fluids such as breast milk and mucosal secretions. Has antimicrobial activity, which depends on the extracellular cation concentration. Antimicrobial properties include bacteriostasis, which is related to its ability to sequester free iron and thus inhibit microbial growth, as well as direct bactericidal properties leading to the release of lipopolysaccharides from the bacterial outer membrane. Can also prevent bacterial biofilm development in P.aeruginosa infection. Has weak antifungal activity against C.albicans. Has anabolic, differentiating and anti-apoptotic effects on osteoblasts and can also inhibit osteoclastogenesis, possibly playing a role in the regulation of bone growth. Promotes binding of species C adenoviruses to epithelial cells, promoting adenovirus infection. Can inhibit papillomavirus infections. Stimulates the TLR4 signaling pathway leading to NF-kappa-B activation and subsequent pro-inflammatory cytokine production while also interfering with the lipopolysaccharide (LPS)-stimulated TLR4 signaling. Inhibits neutrophil granulocyte migration to sites of apoptosis, when secreted by apoptotic cells. Stimulates VEGFA-mediated endothelial cell migration and proliferation. Binds heparin, chondroitin sulfate and possibly other glycosaminoglycans (GAGs). Also binds specifically to pneumococcal surface protein A (PspA), the lipid A portion of bacterial lipopolysaccharide (LPS), lysozyme and DNA. Its function is as follows. Lactoferricin binds to the bacterial surface and is crucial for the bactericidal functions. Has some antiviral activity against papillomavirus infection. N-terminal region shows strong antifungal activity against C.albicans. Contains two BBXB heparin-binding consensus sequences that appear to form the predominate functional GAG-binding site. Functionally, the lactotransferrin transferrin-like domain 1 functions as a serine protease of the peptidase S60 family that cuts arginine rich regions. This function contributes to the antimicrobial activity. Shows a preferential cleavage at -Arg-Ser-Arg-Arg-|- and -Arg-Arg-Ser-Arg-|-, and of Z-Phe-Arg-|-aminomethylcoumarin sites. This Camelus dromedarius (Dromedary) protein is Lactotransferrin (LTF).